The chain runs to 117 residues: Large ribosomal subunit protein bL20 (117 aa).

It belongs to the bacterial ribosomal protein bL20 family.

Functionally, binds directly to 23S ribosomal RNA and is necessary for the in vitro assembly process of the 50S ribosomal subunit. It is not involved in the protein synthesizing functions of that subunit. In Crocosphaera subtropica (strain ATCC 51142 / BH68) (Cyanothece sp. (strain ATCC 51142)), this protein is Large ribosomal subunit protein bL20.